Reading from the N-terminus, the 296-residue chain is Nucleotide-binding protein SMU_1306c (296 aa).

Residue 13–20 (GMSGAGKT) participates in ATP binding. 63–66 (DMRS) contacts GTP.

It belongs to the RapZ-like family.

Functionally, displays ATPase and GTPase activities. The chain is Nucleotide-binding protein SMU_1306c from Streptococcus mutans serotype c (strain ATCC 700610 / UA159).